The primary structure comprises 289 residues: MSNQNSKKHLGHTARKRFGQNFLHDMNVIHNIVSAINPKNGQFLFEIGPGLGALTEPVAEQVDKLTVVELDRDLAERLRHHPFLNHKLTIIEQDALRFNFREYFESLELKEGEGVRVFGNLPYNISTPLMFHLFKFHDLIQDMHFMLQKEVVKRLCAAPNSKAYGRLTIMAQYYCQVVPVLEVPPTAFKPAPKVDSAVVRLMPHKVLPHPVKDVYWLNRVTTQAFNQRRKTLRNALSTLFSPEQLEALNIDLNARAENLSIADYARLANWLYDNPPAVDNQEEIIDEDI.

Asn-21, Leu-23, Gly-48, Glu-69, Asp-94, and Asn-120 together coordinate S-adenosyl-L-methionine.

This sequence belongs to the class I-like SAM-binding methyltransferase superfamily. rRNA adenine N(6)-methyltransferase family. RsmA subfamily.

It localises to the cytoplasm. It catalyses the reaction adenosine(1518)/adenosine(1519) in 16S rRNA + 4 S-adenosyl-L-methionine = N(6)-dimethyladenosine(1518)/N(6)-dimethyladenosine(1519) in 16S rRNA + 4 S-adenosyl-L-homocysteine + 4 H(+). Functionally, specifically dimethylates two adjacent adenosines (A1518 and A1519) in the loop of a conserved hairpin near the 3'-end of 16S rRNA in the 30S particle. May play a critical role in biogenesis of 30S subunits. The chain is Ribosomal RNA small subunit methyltransferase A from Actinobacillus pleuropneumoniae serotype 3 (strain JL03).